A 95-amino-acid chain; its full sequence is Large ribosomal subunit protein eL37y (95 aa).

Zn(2+) is bound by residues C19, C22, C34, and C37. The C4-type zinc-finger motif lies at 19–37; that stretch reads CVRCGRRSFHIQKSRCSAC.

This sequence belongs to the eukaryotic ribosomal protein eL37 family. The cofactor is Zn(2+).

In terms of biological role, binds to the 23S rRNA. The protein is Large ribosomal subunit protein eL37y (RPL37B) of Arabidopsis thaliana (Mouse-ear cress).